A 310-amino-acid chain; its full sequence is Olfactory receptor 4C11 (310 aa).

At 1–23 (MQQNNSVPEFILLGLTQDPLRQK) the chain is on the extracellular side. Asparagine 4 carries an N-linked (GlcNAc...) asparagine glycan. The helical transmembrane segment at 24–47 (IVFVIFLIFYMGTVVGNMLIIVTI) threads the bilayer. Residues 48-55 (KSSRTLGS) are Cytoplasmic-facing. The helical transmembrane segment at 56-77 (PMYFFLFYLSFADSCFSTSTAP) threads the bilayer. Residues 78-98 (RLIVDALSEKKIITYNECMTQ) lie on the Extracellular side of the membrane. Cysteine 95 and cysteine 187 are joined by a disulfide. A helical transmembrane segment spans residues 99–118 (VFALHLFGCMEIFVLILMAV). Over 119–137 (DRYVAICKPLRYPTIMSQQ) the chain is Cytoplasmic. A helical transmembrane segment spans residues 138–156 (VCIILIVLAWIGSLIHSTA). At 157–193 (QIILALRLPFCGPYLIDHYCCDLQPLLKLACMDTYMI) the chain is on the extracellular side. A helical membrane pass occupies residues 194 to 217 (NLLLVSNSGAICSSSFMILIISYI). Residues 218–233 (VILHSLRNHSAKGKKK) lie on the Cytoplasmic side of the membrane. Residues 234-256 (ALSACTSHIIVVILFFGPCIFIY) traverse the membrane as a helical segment. Over 257–267 (TRPPTTFPMDK) the chain is Extracellular. Residues 268–287 (MVAVFYTIGTPFLNPLIYTL) form a helical membrane-spanning segment. Over 288–310 (RNAEVKNAMRKLWHGKIISENKG) the chain is Cytoplasmic.

The protein belongs to the G-protein coupled receptor 1 family.

It localises to the cell membrane. Odorant receptor. This chain is Olfactory receptor 4C11 (OR4C11), found in Homo sapiens (Human).